Here is a 367-residue protein sequence, read N- to C-terminus: Farnesyl pyrophosphate synthase (367 aa).

Isopentenyl diphosphate is bound by residues Lys71, Arg74, and Gln110. Mg(2+) contacts are provided by Asp117 and Asp121. Position 126 (Arg126) interacts with dimethylallyl diphosphate. Arg127 serves as a coordination point for isopentenyl diphosphate. Dimethylallyl diphosphate contacts are provided by Lys214, Thr215, Gln254, Lys271, and Lys280.

Belongs to the FPP/GGPP synthase family. In terms of assembly, homodimer. Mg(2+) serves as cofactor.

It is found in the cytoplasm. The catalysed reaction is isopentenyl diphosphate + dimethylallyl diphosphate = (2E)-geranyl diphosphate + diphosphate. It carries out the reaction isopentenyl diphosphate + (2E)-geranyl diphosphate = (2E,6E)-farnesyl diphosphate + diphosphate. The protein operates within isoprenoid biosynthesis; farnesyl diphosphate biosynthesis; farnesyl diphosphate from geranyl diphosphate and isopentenyl diphosphate: step 1/1. It participates in isoprenoid biosynthesis; geranyl diphosphate biosynthesis; geranyl diphosphate from dimethylallyl diphosphate and isopentenyl diphosphate: step 1/1. Functionally, catalyzes the sequential condensation of isopentenyl pyrophosphate with the allylic pyrophosphates, dimethylallyl pyrophosphate, and then with the resultant geranylpyrophosphate to the ultimate product farnesyl pyrophosphate. This chain is Farnesyl pyrophosphate synthase (FDPS), found in Gallus gallus (Chicken).